We begin with the raw amino-acid sequence, 395 residues long: XK-related protein 8 (395 aa).

Residues 1–12 (MPWSSRGALLRD) are Cytoplasmic-facing. The helical transmembrane segment at 13-33 (LVLGVLGTAAFLLDLGTDLWA) threads the bilayer. The Extracellular portion of the chain corresponds to 34–47 (AVQYALGGRYLWAA). The chain crosses the membrane as a helical span at residues 48-68 (LVLALLGLASVALQLFSWLWL). The Cytoplasmic segment spans residues 69-158 (RADPAGLHGS…VLAIMLQSGR (90 aa)). The helical transmembrane segment at 159 to 179 (AEYYQWVGICTSFLGISWALL) threads the bilayer. The Extracellular segment spans residues 180–200 (DYHRALRTCLPSRPLLGLGSS). Residues 201 to 221 (VIYFLWNLLLLWPRVLAVALF) form a helical membrane-spanning segment. Over 222-223 (SA) the chain is Cytoplasmic. A helical transmembrane segment spans residues 224-244 (LFPSYVALHFLGLWLVLLLWV). At 245–258 (WLQGTDFMPDPSSE) the chain is on the extracellular side. A helical transmembrane segment spans residues 259–279 (WLYQVTVATILYFSWFNVAEG). Residues 280–284 (RTRGR) lie on the Cytoplasmic side of the membrane. A helical membrane pass occupies residues 285 to 305 (AIIHFAFLLSDSILLVATWVT). The Extracellular portion of the chain corresponds to 306-312 (HSSWLPS). Residues 313–333 (GIPLQLWLPVGCGCFFLGLAL) form a helical membrane-spanning segment. Over 334–395 (RLVYYHWLHP…KDEAALPVKG (62 aa)) the chain is Cytoplasmic. The residue at position 362 (serine 362) is a Phosphoserine. The residue at position 375 (threonine 375) is a Phosphothreonine.

The protein belongs to the XK family. Interacts with BSG and NPTN; which act as chaperones to localize XKR8 at the cell membrane. As to quaternary structure, homodimer. Post-translationally, undergoes proteolytic processing by caspase-3 (CASP3), leading to its activation. In terms of processing, phosphorylation at Thr-375 activates the phospholipid scramblase activity.

It is found in the cell membrane. It localises to the cytoplasm. The protein localises to the perinuclear region. The enzyme catalyses a 1,2-diacyl-sn-glycero-3-phospho-L-serine(in) = a 1,2-diacyl-sn-glycero-3-phospho-L-serine(out). With respect to regulation, activated upon caspase cleavage to generate the XK-related protein 8, processed form. Does not act prior the onset of apoptosis. In terms of biological role, phospholipid scramblase that promotes phosphatidylserine exposure on apoptotic cell surface. Phosphatidylserine is a specific marker only present at the surface of apoptotic cells and acts as a specific signal for engulfment. Required for the clearance of apoptotic cells, such as engulfment of apoptotic germ cells by Sertoli cells, clearance of senescent neutrophils or regulation of bipolar cell numbers in the retina. Has no effect on calcium-induced exposure of phosphatidylserine. Promotes myoblast differentiation and survival. The sequence is that of XK-related protein 8 from Pan troglodytes (Chimpanzee).